We begin with the raw amino-acid sequence, 472 residues long: Carboxypeptidase Q (472 aa).

Positions 1-20 (MKFLIFAFFGGVHLLSLCSG) are cleaved as a signal peptide. The propeptide occupies 21-44 (KAIYKNGISKRTFEEIKEEIASYG). 2 N-linked (GlcNAc...) asparagine glycosylation sites follow: Asn-61 and Asn-179. His-290 and Asp-302 together coordinate Zn(2+). Glu-336 serves as the catalytic Nucleophile. Glu-337 is a Zn(2+) binding site. Asn-353 and Asn-356 each carry an N-linked (GlcNAc...) asparagine glycan. Zn(2+) is bound at residue Asp-364. Residue Asn-396 is glycosylated (N-linked (GlcNAc...) asparagine). His-434 is a binding site for Zn(2+).

This sequence belongs to the peptidase M28 family. Homodimer. The monomeric form is inactive while the homodimer is active. Post-translationally, N-glycosylated. The secreted form is modified by hybrid or complex type oligosaccharide chains.

Its subcellular location is the endoplasmic reticulum. It is found in the golgi apparatus. The protein resides in the lysosome. The protein localises to the secreted. Its function is as follows. Carboxypeptidase that may play an important role in the hydrolysis of circulating peptides. Catalyzes the hydrolysis of dipeptides with unsubstituted terminals into amino acids. May play a role in the liberation of thyroxine hormone from its thyroglobulin (Tg) precursor. This chain is Carboxypeptidase Q (CPQ), found in Pongo abelii (Sumatran orangutan).